The primary structure comprises 203 residues: Dephospho-CoA kinase (203 aa).

The region spanning 3–201 (SVGLTGGIGS…QRYLGYAAAA (199 aa)) is the DPCK domain. Residue 11–16 (GSGKTT) coordinates ATP.

Belongs to the CoaE family.

The protein resides in the cytoplasm. The enzyme catalyses 3'-dephospho-CoA + ATP = ADP + CoA + H(+). The protein operates within cofactor biosynthesis; coenzyme A biosynthesis; CoA from (R)-pantothenate: step 5/5. In terms of biological role, catalyzes the phosphorylation of the 3'-hydroxyl group of dephosphocoenzyme A to form coenzyme A. This Burkholderia thailandensis (strain ATCC 700388 / DSM 13276 / CCUG 48851 / CIP 106301 / E264) protein is Dephospho-CoA kinase.